We begin with the raw amino-acid sequence, 827 residues long: Zinc finger protein 438 (827 aa).

Disordered regions lie at residues 1 to 31 (MQNSLSVPPRDEGESNIPSGTIQSRKGLQNK), 117 to 173 (LKLP…LYKP), and 193 to 232 (ALTNGSDHGDLRPPVTNTHGSLNPPATPASPTPEEPAKQD). Polar residues-rich tracts occupy residues 16 to 31 (NIPSGTIQSRKGLQNK) and 150 to 159 (PAQTQMCPQM). The segment covering 217-226 (PATPASPTPE) has biased composition (pro residues). 3 consecutive C2H2-type zinc fingers follow at residues 506–528 (HRCHVCNHHFQFKQHLQDHMNTH), 534–556 (YSCRICRKSYVRPGSLSTHMKLH), and 566–589 (MCCEFCAKVFGHIRVYFGHLKEVH). The disordered stretch occupies residues 682 to 723 (FPGSKGTQEELVQHASHDWKRHPERGKPEKVHSSSEESHACP). Basic and acidic residues-rich tracts occupy residues 688–699 (TQEELVQHASHD) and 706–721 (RGKPEKVHSSSEESHA). A C2H2-type 4 zinc finger spans residues 775 to 798 (FNCLLCAEMLGQKEDLLHHWKHQH).

Its subcellular location is the nucleus. Its function is as follows. Acts as a transcriptional repressor. This Pongo abelii (Sumatran orangutan) protein is Zinc finger protein 438 (ZNF438).